The sequence spans 350 residues: Glycerol-1-phosphate dehydrogenase [NAD(P)+] (350 aa).

Residues 96 to 100 (GNIID) and 118 to 121 (TAPS) each bind NAD(+). D123 provides a ligand contact to substrate. S127 lines the NAD(+) pocket. D170 contacts substrate. Residues D170 and H250 each coordinate Zn(2+). Substrate is bound at residue H254. A Zn(2+)-binding site is contributed by H266.

This sequence belongs to the glycerol-1-phosphate dehydrogenase family. Homodimer. The cofactor is Zn(2+).

The protein resides in the cytoplasm. It carries out the reaction sn-glycerol 1-phosphate + NAD(+) = dihydroxyacetone phosphate + NADH + H(+). It catalyses the reaction sn-glycerol 1-phosphate + NADP(+) = dihydroxyacetone phosphate + NADPH + H(+). It participates in membrane lipid metabolism; glycerophospholipid metabolism. In terms of biological role, catalyzes the NAD(P)H-dependent reduction of dihydroxyacetonephosphate (DHAP or glycerone phosphate) to glycerol 1-phosphate (G1P). The G1P thus generated is used as the glycerophosphate backbone of phospholipids in the cellular membranes of Archaea. The protein is Glycerol-1-phosphate dehydrogenase [NAD(P)+] of Sulfurisphaera tokodaii (strain DSM 16993 / JCM 10545 / NBRC 100140 / 7) (Sulfolobus tokodaii).